Consider the following 362-residue polypeptide: MIGGLEHLARRGLFLFDPEAAHGLSITALKTGLVPSCAAPADPRLQQSVAGLAFPNPVGMAAGYDKNAEVPEALLKIGFGFTEIGTVTPRPQPGNDKPRLFRLIEDEAVINRLGFNNEGHGAALARLKACSREALIGVNIGANKDSADRIADYVTGIRTFYAVARYFTANISSPNTPGLRDLQARESLATLLSAVLAAREDEAGKCGRRVPVFLKIAPDLTEEGMDDIAAEVLAQGLDGLIVSNTTLARARLRDRKQASEVGGLSGKPLFEKSTAVLARMRRRVGPDLPIIGVGGVSSAETAAEKIRAGADLVQLYSCMVYEGPSLPGRIVRGLSALCDREKLASIREIRDSRVDYWTGMNV.

Residues 62–66 (AGYDK) and threonine 86 each bind FMN. A substrate-binding site is contributed by lysine 66. 111–115 (NRLGF) contributes to the substrate binding site. 2 residues coordinate FMN: asparagine 139 and asparagine 170. Substrate is bound at residue asparagine 170. Serine 173 serves as the catalytic Nucleophile. Asparagine 175 serves as a coordination point for substrate. 2 residues coordinate FMN: lysine 215 and serine 243. 244-245 (NT) is a binding site for substrate. FMN is bound by residues glycine 266, glycine 295, and 316-317 (YS).

Belongs to the dihydroorotate dehydrogenase family. Type 2 subfamily. In terms of assembly, monomer. FMN serves as cofactor.

The protein resides in the cell membrane. The enzyme catalyses (S)-dihydroorotate + a quinone = orotate + a quinol. It functions in the pathway pyrimidine metabolism; UMP biosynthesis via de novo pathway; orotate from (S)-dihydroorotate (quinone route): step 1/1. Its function is as follows. Catalyzes the conversion of dihydroorotate to orotate with quinone as electron acceptor. This is Dihydroorotate dehydrogenase (quinone) from Sinorhizobium medicae (strain WSM419) (Ensifer medicae).